We begin with the raw amino-acid sequence, 498 residues long: GTPase Der (498 aa).

2 consecutive EngA-type G domains span residues 3–167 and 210–383; these read PVVA…FDDL and IKLA…KSAT. Residues 9-16, 57-61, 119-122, 216-223, 263-267, and 328-331 contribute to the GTP site; these read GRPNVGKS, DTGGI, NKID, DTAGV, and NKWD. A KH-like domain is found at 384-468; that stretch reads TRVGTSVLTR…PIRINFQNSE (85 aa).

The protein belongs to the TRAFAC class TrmE-Era-EngA-EngB-Septin-like GTPase superfamily. EngA (Der) GTPase family. In terms of assembly, associates with the 50S ribosomal subunit.

Its function is as follows. GTPase that plays an essential role in the late steps of ribosome biogenesis. The polypeptide is GTPase Der (Vibrio parahaemolyticus serotype O3:K6 (strain RIMD 2210633)).